The chain runs to 378 residues: Probable endopolygalacturonase E (378 aa).

A signal peptide spans 1–19 (MVTSSSVIVLTLWAALVSA). A propeptide spanning residues 20-38 (SPVADPLVTPAPKLEDLEK) is cleaved from the precursor. Cys43 and Cys61 are oxidised to a cystine. PbH1 repeat units follow at residues 103–125 (GPLV…YLNG), 174–204 (STYL…DIGD), and 205–226 (STYI…AVNS). The active-site Proton donor is the Asp219. Cysteines 221 and 237 form a disulfide. His241 is an active-site residue. 3 PbH1 repeats span residues 256–277 (VKNV…RIKT), 285–307 (VSEV…VVEQ), and 317–345 (TDGI…YIVC). Residue Asn258 is glycosylated (N-linked (GlcNAc...) asparagine). Disulfide bonds link Cys345-Cys350 and Cys369-Cys378.

It belongs to the glycosyl hydrolase 28 family.

The protein resides in the secreted. The catalysed reaction is (1,4-alpha-D-galacturonosyl)n+m + H2O = (1,4-alpha-D-galacturonosyl)n + (1,4-alpha-D-galacturonosyl)m.. Functionally, involved in maceration and soft-rotting of plant tissue. Hydrolyzes the 1,4-alpha glycosidic bonds of de-esterified pectate in the smooth region of the plant cell wall. This is Probable endopolygalacturonase E (pgaE) from Aspergillus niger (strain ATCC MYA-4892 / CBS 513.88 / FGSC A1513).